We begin with the raw amino-acid sequence, 201 residues long: Ribosome maturation factor RimP (201 aa).

Positions 180 to 201 are disordered; sequence LRRGSAPAQDEEGEDEAPGAPL. A compositionally biased stretch (acidic residues) spans 188–201; sequence QDEEGEDEAPGAPL.

Belongs to the RimP family.

It localises to the cytoplasm. In terms of biological role, required for maturation of 30S ribosomal subunits. The sequence is that of Ribosome maturation factor RimP from Methylobacterium sp. (strain 4-46).